A 317-amino-acid chain; its full sequence is L-lactate dehydrogenase (317 aa).

NAD(+) is bound by residues V16, D37, R42, Y67, and G81 to A82. Residues Q84 and R90 each coordinate substrate. NAD(+) contacts are provided by residues S103, A120–N122, and S145. N122–D125 serves as a coordination point for substrate. D150–R153 is a binding site for substrate. The active-site Proton acceptor is H177. Y221 carries the phosphotyrosine modification. T230 provides a ligand contact to substrate.

It belongs to the LDH/MDH superfamily. LDH family. In terms of assembly, homotetramer.

The protein localises to the cytoplasm. It carries out the reaction (S)-lactate + NAD(+) = pyruvate + NADH + H(+). It participates in fermentation; pyruvate fermentation to lactate; (S)-lactate from pyruvate: step 1/1. Its function is as follows. Catalyzes the conversion of lactate to pyruvate. The sequence is that of L-lactate dehydrogenase from Limosilactobacillus fermentum (strain NBRC 3956 / LMG 18251) (Lactobacillus fermentum).